Reading from the N-terminus, the 503-residue chain is Aromatase (503 aa).

The next 3 membrane-spanning stretches (helical) occupy residues 19–39, 51–71, and 303–323; these read EVAP…LLVW, GYFL…MGIG, and MLIA…FLIA. The substrate site is built by Asp-309 and Met-374. Cys-437 serves as a coordination point for heme.

This sequence belongs to the cytochrome P450 family. Heme is required as a cofactor.

Its subcellular location is the endoplasmic reticulum membrane. It localises to the microsome membrane. It catalyses the reaction testosterone + 3 reduced [NADPH--hemoprotein reductase] + 3 O2 = 17beta-estradiol + formate + 3 oxidized [NADPH--hemoprotein reductase] + 4 H2O + 4 H(+). The catalysed reaction is androst-4-ene-3,17-dione + 3 reduced [NADPH--hemoprotein reductase] + 3 O2 = estrone + formate + 3 oxidized [NADPH--hemoprotein reductase] + 4 H2O + 4 H(+). The enzyme catalyses androst-4-ene-3,17-dione + reduced [NADPH--hemoprotein reductase] + O2 = 19-hydroxyandrost-4-ene-3,17-dione + oxidized [NADPH--hemoprotein reductase] + H2O + H(+). It carries out the reaction 19-hydroxyandrost-4-ene-3,17-dione + reduced [NADPH--hemoprotein reductase] + O2 = 19-oxo-androst-4-ene-3,17-dione + oxidized [NADPH--hemoprotein reductase] + 2 H2O + H(+). It catalyses the reaction 19-oxo-androst-4-ene-3,17-dione + reduced [NADPH--hemoprotein reductase] + O2 = estrone + formate + oxidized [NADPH--hemoprotein reductase] + H2O + 2 H(+). The catalysed reaction is estrone + reduced [NADPH--hemoprotein reductase] + O2 = 2-hydroxyestrone + oxidized [NADPH--hemoprotein reductase] + H2O + H(+). The enzyme catalyses 17beta-hydroxy-5alpha-androstan-3-one + reduced [NADPH--hemoprotein reductase] + O2 = 17beta,19-dihydroxy-3-oxo-5alpha-androstanone + oxidized [NADPH--hemoprotein reductase] + H2O + H(+). It carries out the reaction 17beta,19-dihydroxy-3-oxo-5alpha-androstanone + reduced [NADPH--hemoprotein reductase] + O2 = 17beta-hydroxy-3,19-dioxo-5alpha-androstanone + oxidized [NADPH--hemoprotein reductase] + 2 H2O + H(+). It catalyses the reaction 17beta-hydroxy-3,19-dioxo-5alpha-androstanone + reduced [NADPH--hemoprotein reductase] + O2 = 17beta-hydroxy-3-oxo-19-nor-5alpha-androst-1-ene + formate + oxidized [NADPH--hemoprotein reductase] + H2O + 2 H(+). It functions in the pathway steroid hormone biosynthesis. Its function is as follows. A cytochrome P450 monooxygenase that catalyzes the conversion of C19 androgens, androst-4-ene-3,17-dione (androstenedione) and testosterone to the C18 estrogens, estrone and estradiol, respectively. Catalyzes three successive oxidations of C19 androgens: two conventional oxidations at C19 yielding 19-hydroxy and 19-oxo/19-aldehyde derivatives, followed by a third oxidative aromatization step that involves C1-beta hydrogen abstraction combined with cleavage of the C10-C19 bond to yield a phenolic A ring and formic acid. Alternatively, the third oxidative reaction yields a 19-norsteroid and formic acid. Converts dihydrotestosterone to delta1,10-dehydro 19-nordihydrotestosterone and may play a role in homeostasis of this potent androgen. Also displays 2-hydroxylase activity toward estrone. Mechanistically, uses molecular oxygen inserting one oxygen atom into a substrate, and reducing the second into a water molecule, with two electrons provided by NADPH via cytochrome P450 reductase (CPR; NADPH-ferrihemoprotein reductase). This chain is Aromatase (CYP19A1), found in Leucopleurus acutus (Atlantic white-sided dolphin).